A 225-amino-acid polypeptide reads, in one-letter code: uncharacterized protein (225 aa).

Residues 1 to 19 (MKFNSISPNKQHHTGFTTS) show a composition bias toward polar residues. Residues 1–21 (MKFNSISPNKQHHTGFTTSNN) form a disordered region.

This is an uncharacterized protein from Dictyostelium discoideum (Social amoeba).